Consider the following 118-residue polypeptide: Co-chaperonin GroES (118 aa).

Belongs to the GroES chaperonin family. In terms of assembly, heptamer of 7 subunits arranged in a ring. Interacts with the chaperonin GroEL.

The protein localises to the cytoplasm. Its function is as follows. Together with the chaperonin GroEL, plays an essential role in assisting protein folding. The GroEL-GroES system forms a nano-cage that allows encapsulation of the non-native substrate proteins and provides a physical environment optimized to promote and accelerate protein folding. GroES binds to the apical surface of the GroEL ring, thereby capping the opening of the GroEL channel. The polypeptide is Co-chaperonin GroES (Helicobacter pylori (strain G27)).